The primary structure comprises 21 residues: S-layer protein 2 (21 aa).

It localises to the secreted. Its subcellular location is the cell wall. The protein localises to the S-layer. Functionally, the S-layer is a paracrystalline mono-layered assembly of proteins which coat the surface of bacteria. The polypeptide is S-layer protein 2 (Bacillus thuringiensis subsp. konkukian).